Consider the following 137-residue polypeptide: Peptide methionine sulfoxide reductase MsrB (137 aa).

Residues 7 to 129 (PTENIEKLTD…NSASLNFVDD (123 aa)) form the MsrB domain. Residues Cys46, Cys49, Cys95, and Cys98 each contribute to the Zn(2+) site. Residue Cys118 is the Nucleophile of the active site.

It belongs to the MsrB Met sulfoxide reductase family. Zn(2+) is required as a cofactor.

The catalysed reaction is L-methionyl-[protein] + [thioredoxin]-disulfide + H2O = L-methionyl-(R)-S-oxide-[protein] + [thioredoxin]-dithiol. The chain is Peptide methionine sulfoxide reductase MsrB from Yersinia enterocolitica serotype O:8 / biotype 1B (strain NCTC 13174 / 8081).